The primary structure comprises 247 residues: 5'-nucleotidase SurE (247 aa).

A divalent metal cation is bound by residues Asp8, Asp9, Ser39, and Asn91.

It belongs to the SurE nucleotidase family. It depends on a divalent metal cation as a cofactor.

The protein localises to the cytoplasm. The catalysed reaction is a ribonucleoside 5'-phosphate + H2O = a ribonucleoside + phosphate. In terms of biological role, nucleotidase that shows phosphatase activity on nucleoside 5'-monophosphates. The protein is 5'-nucleotidase SurE of Ruthia magnifica subsp. Calyptogena magnifica.